Here is an 80-residue protein sequence, read N- to C-terminus: Exodeoxyribonuclease 7 small subunit (80 aa).

This sequence belongs to the XseB family. In terms of assembly, heterooligomer composed of large and small subunits.

It is found in the cytoplasm. The catalysed reaction is Exonucleolytic cleavage in either 5'- to 3'- or 3'- to 5'-direction to yield nucleoside 5'-phosphates.. In terms of biological role, bidirectionally degrades single-stranded DNA into large acid-insoluble oligonucleotides, which are then degraded further into small acid-soluble oligonucleotides. The chain is Exodeoxyribonuclease 7 small subunit from Pseudomonas putida (strain W619).